The sequence spans 425 residues: G protein-activated inward rectifier potassium channel 2 (425 aa).

Residues 1 to 91 (MTMAKLTESM…ILTTLVDLKW (91 aa)) are Cytoplasmic-facing. Phosphoserine is present on residues serine 18 and serine 25. The helical transmembrane segment at 92–116 (RFNLLIFVMVYTVTWLFFGMIWWLI) threads the bilayer. At 117-140 (AYIRGDMDHVEDPSWTPCVTNLNG) the chain is on the extracellular side. Positions 141 to 152 (FVSAFLFSIETE) form an intramembrane region, helical; Pore-forming. The pore-forming intramembrane region spans 153 to 159 (TTIGYGY). A Selectivity filter motif is present at residues 154 to 159 (TIGYGY). The Extracellular segment spans residues 160 to 168 (RVITDKCPE). A helical membrane pass occupies residues 169–190 (GIILLLIQSVLGSIVNAFMVGC). Residues 191–425 (MFVKISQPKK…VANLENESKV (235 aa)) are Cytoplasmic-facing. Positions 392 to 425 (NQHAELETEEEEKNPEEQTERNGDVANLENESKV) are disordered. The short motif at 422 to 425 (ESKV) is the PDZ-binding element.

This sequence belongs to the inward rectifier-type potassium channel (TC 1.A.2.1) family. KCNJ6 subfamily. In terms of assembly, associates with KCNJ3/GIRK1 or KCNJ5/GRIK4 to form a G-protein-activated heteromultimer pore-forming unit. The resulting inward current is much larger. Interacts (via PDZ-binding motif) with SNX27 (via PDZ domain); the interaction is required when endocytosed to prevent degradation in lysosomes and promote recycling to the plasma membrane. Expressed in insulin-secreting cells and brain.

The protein resides in the membrane. It catalyses the reaction K(+)(in) = K(+)(out). With respect to regulation, activated by phosphatidylinositol 4,5 biphosphate (PtdIns(4,5)P2). Its function is as follows. Inward rectifier potassium channels are characterized by a greater tendency to allow potassium to flow into the cell rather than out of it. Their voltage dependence is regulated by the concentration of extracellular potassium; as external potassium is raised, the voltage range of the channel opening shifts to more positive voltages. The inward rectification is mainly due to the blockage of outward current by internal magnesium. This potassium channel may be involved in the regulation of insulin secretion by glucose and/or neurotransmitters acting through G-protein-coupled receptors. This Mesocricetus auratus (Golden hamster) protein is G protein-activated inward rectifier potassium channel 2 (KCNJ6).